A 352-amino-acid chain; its full sequence is Uroporphyrinogen decarboxylase (352 aa).

Substrate-binding positions include 26–30, F45, D76, Y153, S208, and H323; that span reads RQAGR.

The protein belongs to the uroporphyrinogen decarboxylase family. In terms of assembly, homodimer.

The protein resides in the cytoplasm. The catalysed reaction is uroporphyrinogen III + 4 H(+) = coproporphyrinogen III + 4 CO2. It functions in the pathway porphyrin-containing compound metabolism; protoporphyrin-IX biosynthesis; coproporphyrinogen-III from 5-aminolevulinate: step 4/4. Its function is as follows. Catalyzes the decarboxylation of four acetate groups of uroporphyrinogen-III to yield coproporphyrinogen-III. The polypeptide is Uroporphyrinogen decarboxylase (Prochlorococcus marinus (strain MIT 9313)).